Reading from the N-terminus, the 61-residue chain is Small ribosomal subunit protein uS14 (61 aa).

Positions 24, 27, 40, and 43 each coordinate Zn(2+).

This sequence belongs to the universal ribosomal protein uS14 family. Zinc-binding uS14 subfamily. Part of the 30S ribosomal subunit. Contacts proteins S3 and S10. It depends on Zn(2+) as a cofactor.

Functionally, binds 16S rRNA, required for the assembly of 30S particles and may also be responsible for determining the conformation of the 16S rRNA at the A site. In Oleidesulfovibrio alaskensis (strain ATCC BAA-1058 / DSM 17464 / G20) (Desulfovibrio alaskensis), this protein is Small ribosomal subunit protein uS14.